The chain runs to 572 residues: Oxygen-dependent choline dehydrogenase (572 aa).

9-38 (DYVIIGGGSAGSVLGARLSEDKDKNVLVLE) serves as a coordination point for FAD. His477 functions as the Proton acceptor in the catalytic mechanism.

Belongs to the GMC oxidoreductase family. Requires FAD as cofactor.

The catalysed reaction is choline + A = betaine aldehyde + AH2. It carries out the reaction betaine aldehyde + NAD(+) + H2O = glycine betaine + NADH + 2 H(+). The protein operates within amine and polyamine biosynthesis; betaine biosynthesis via choline pathway; betaine aldehyde from choline (cytochrome c reductase route): step 1/1. Functionally, involved in the biosynthesis of the osmoprotectant glycine betaine. Catalyzes the oxidation of choline to betaine aldehyde and betaine aldehyde to glycine betaine at the same rate. The protein is Oxygen-dependent choline dehydrogenase of Staphylococcus epidermidis (strain ATCC 35984 / DSM 28319 / BCRC 17069 / CCUG 31568 / BM 3577 / RP62A).